Consider the following 97-residue polypeptide: YcgL domain-containing protein PFL_1496 (97 aa).

One can recognise a YcgL domain in the interval 3–87; sequence RICSIYKSPR…AEDEYIEHLP (85 aa).

The protein is YcgL domain-containing protein PFL_1496 of Pseudomonas fluorescens (strain ATCC BAA-477 / NRRL B-23932 / Pf-5).